Reading from the N-terminus, the 726-residue chain is Replication restart protein PriA (726 aa).

Isoleucine 234 contributes to the ATP binding site. The 140-residue stretch at 234 to 373 (IQSVLYKGVQ…LHRKCFYIKL (140 aa)) folds into the Helicase ATP-binding domain. Residues 316–319 (LEEH) carry the DEAH box motif. Positions 431, 434, 440, 443, 458, 461, 471, and 474 each coordinate Zn(2+).

This sequence belongs to the helicase family. PriA subfamily. Component of the replication restart primosome. It depends on Zn(2+) as a cofactor.

The catalysed reaction is Couples ATP hydrolysis with the unwinding of duplex DNA by translocating in the 3'-5' direction.. The enzyme catalyses ATP + H2O = ADP + phosphate + H(+). Functionally, initiates the restart of stalled replication forks, which reloads the replicative helicase on sites other than the origin of replication. Recognizes and binds to abandoned replication forks and remodels them to uncover a helicase loading site. Promotes assembly of the primosome at these replication forks. The protein is Replication restart protein PriA of Buchnera aphidicola subsp. Acyrthosiphon pisum (strain APS) (Acyrthosiphon pisum symbiotic bacterium).